Consider the following 1828-residue polypeptide: MILKSFLLGNLLSLCMKIINSVVVVGLYYGFLTTFSIGPSYLFLLRARVMEEGTEKEVSATTGFITGQLMIFISIYYAPLHLAMGRPYTITVLGLPYLLFHFFWKNHKHFFDYGSTNLNSMRNFSIQSIFLNNFIFQLLNHFVLPSSTLIRLVNISMFRCNNKTLFVISSFVGWLIGHILFMKWVGLILFWIQRNRSIRSNPLIRSNKYLVSELRNFLSRMVNIFLFITCVYYLGRIPSPILTKKLKETSETEEGEENEDETNVEIEKFSEAKETKQEQKGSFAEEDSSLGSEEREDPNKLYGKKRKGYQENWKFEILKDKDLFWFEKPIVTLLFDYKRWDRPLRYIKNDRFANAVRNEMSQYFFHKCPVDGKQKISFTYPPSLSIFFEMIEKHLSLCTTEKLSPEDLYNHWVYTNEKKRCNLNNEFINRIEALNKGSLSMHVLEKRTRLYNDKNEQECLPRMYDPFLNGPYRGTIKKVYSHSILDASTTSTEDSLRVVWINKIDDILPTNYQEFEEKMDPFNGESLSTDINHSLASTSELAGESPMDFRFNLKEGLVLPAEQKQRRFDSENPMKYLKFLFDAITTDTPNYKTIQTKSIGIEEIGKKVPRWSYKLTNDLQQQERENEEESTEDHAIRSRKSKRVVIYTDNDKNPNTPISTNGNQAEEVALIRYSQQSDFRRDLIKGSRRAQRRKTVTWEIFQANVHSPLFLDRIDKTFFFSFDISGTINLAFRNWTEKGSEFKTSNSDEKETKEKEKKREDKKEENERIAIAETWDTIIFAQAIRGIMLVTQSILRKYIVLPSLIIAKNLVRMLLFQFPEWYEDLKEWNREMHVKCTYNGVQLSETEFPKDWLTDGIQIKILFPFCLKPWHRSKLRPHHRDPMKKKGKKDNFCFLTVWGMETELPFGSSRKRPSFFEPILKELEKKIRKAKKKYFLVLSVLKEWFRKVSKEKTRWIRKIVLFIKKIIKEFAKVNSILLFGRKKVYESNENKKDSITIISNKILSEPTIRIRSMDWTNYSLTEKKMKDLADRTTTIRNQIERITKEKRTIFLTPDRNGSPNETSCDDKRSESQKHIWQISKRRSAWFIRKWRYFIKIFSERIYIDIFLCAINIPRVNAQLFFESTKKILDKYIYNDQRKKEGIDETNPNKLISISKKYFSNISNKKSRIYWDLSSLSQAYLFYKLSQTQVINKYRLKSVLQYRDLFLRDRIRDYLGTRGIFDSKFKKLPNSGMGEWKNWLRGHYQYNLSQTRWSRLVSKKWRDRVNQHRTIQNKDYKRDSYEKDQFIHYEKQNDSVVNSLPSQKEKFQKHYRYDLFSYKYINYGVNYGDSKDSYRSPLQVNEDRGIPYNYNTPKSESVFVLGGIALSDYLEEKYIIDRGKSRDKKYLEWKILNFCLRKNIDIEAWTNINKNTKIGTNDYQIIDKKNPFYLTTYQEINPLNPKSFFFGRMGMNQGMLYRPIANLEPWFFSEFVPLYDAYKIKPWIIPIKLLLFNFEGNETISENKNINGNKKGELPISSNQKDYLELENRNQEEKEEFGQGNLGSDTQNQQKDVEKDYAKSDIKKRGKKRQSKSNKGAELQFFLKRYLLFQLRWDDPLNQRMMNNVKVYCLLLRLINPREIAISSIQRGEMRLDVMLIQKDLTLTELIKRGILIIEPVRLSIKWDGQFIMYQTIGISLVHKNKHQTNRRYREKRYVDENYFDGSIAQHGKMLVNRAENDYDLLVPENILSPRRRRELRILISFNSGNRNVVDRNLVFFNGNNVKNFGQFLDEDKHIDTDINKFIQFKLFLWPNYRLEDLACINRYWFDTNNGSRFSMLRIHMYPPRFGIG.

6 consecutive transmembrane segments (helical) span residues 18–38 (IINSVVVVGLYYGFLTTFSIG), 64–84 (FITGQLMIFISIYYAPLHLAM), 87–107 (PYTITVLGLPYLLFHFFWKNH), 124–144 (FSIQSIFLNNFIFQLLNHFVL), 172–192 (VGWLIGHILFMKWVGLILFWI), and 222–242 (VNIFLFITCVYYLGRIPSPIL). Residues 270–279 (SEAKETKQEQ) are compositionally biased toward basic and acidic residues. Disordered regions lie at residues 270–301 (SEAKETKQEQKGSFAEEDSSLGSEEREDPNKL), 618–637 (DLQQQERENEEESTEDHAIR), 741–763 (EFKTSNSDEKETKEKEKKREDKK), and 1533–1571 (KEEFGQGNLGSDTQNQQKDVEKDYAKSDIKKRGKKRQSK). Positions 1550–1562 (KDVEKDYAKSDIK) are enriched in basic and acidic residues.

The protein belongs to the TIC214 family. In terms of assembly, part of the Tic complex.

Its subcellular location is the plastid. It localises to the chloroplast inner membrane. In terms of biological role, involved in protein precursor import into chloroplasts. May be part of an intermediate translocation complex acting as a protein-conducting channel at the inner envelope. This chain is Protein TIC 214, found in Calycanthus floridus var. glaucus (Eastern sweetshrub).